Consider the following 209-residue polypeptide: Uridine kinase (209 aa).

12–19 (GGSGSGKT) lines the ATP pocket.

Belongs to the uridine kinase family.

Its subcellular location is the cytoplasm. It carries out the reaction uridine + ATP = UMP + ADP + H(+). The enzyme catalyses cytidine + ATP = CMP + ADP + H(+). Its pathway is pyrimidine metabolism; CTP biosynthesis via salvage pathway; CTP from cytidine: step 1/3. It participates in pyrimidine metabolism; UMP biosynthesis via salvage pathway; UMP from uridine: step 1/1. The sequence is that of Uridine kinase from Streptococcus mutans serotype c (strain ATCC 700610 / UA159).